The sequence spans 168 residues: Photosystem I assembly protein Ycf3 (168 aa).

TPR repeat units lie at residues 35–68, 72–105, and 120–153; these read AFTY…EIDP, SYIL…NPFL, and GEQA…TPGN.

The protein belongs to the Ycf3 family.

The protein resides in the plastid. The protein localises to the chloroplast thylakoid membrane. Its function is as follows. Essential for the assembly of the photosystem I (PSI) complex. May act as a chaperone-like factor to guide the assembly of the PSI subunits. This is Photosystem I assembly protein Ycf3 from Drimys granadensis.